The sequence spans 492 residues: Tumor necrosis factor receptor superfamily member 8 (492 aa).

The signal sequence occupies residues 1–18 (MSILLKAAGLLFLGMLQA). Residues 19-282 (FPKDRPLDTT…STGTPFLDPG (264 aa)) lie on the Extracellular side of the membrane. TNFR-Cys repeat units follow at residues 57-104 (PCPQ…PRIC) and 105-141 (ECQP…NTIC). Disulfide bonds link Cys58-Cys80, Cys83-Cys96, Cys86-Cys104, and Cys123-Cys141. A disordered region spans residues 141–178 (CDLPSPGSGPNGSNPDDCKTLTSHTTPQAIPTLESPAN). The segment covering 144 to 155 (PSPGSGPNGSNP) has biased composition (low complexity). Residues Asn151, Asn178, and Asn224 are each glycosylated (N-linked (GlcNAc...) asparagine). Polar residues predominate over residues 160–178 (TLTSHTTPQAIPTLESPAN). Residues 283 to 303 (SMLFWVAMVVLLVGSASFLLC) form a helical membrane-spanning segment. Over 304 to 492 (YWKACRRRFQ…DHEPTTVSEK (189 aa)) the chain is Cytoplasmic. Residues Ser334 and Ser348 each carry the phosphoserine modification. Disordered regions lie at residues 336-366 (PTEK…PPAV) and 432-492 (PEGR…VSEK). Polar residues predominate over residues 339 to 360 (KLTQLQRSGSVTDSSAGHTLSP). Composition is skewed to basic and acidic residues over residues 450-459 (EVDHTPHYPE) and 478-492 (EGGK…VSEK).

It belongs to the TNFR8 family. Interacts with TRAF1, TRAF2, TRAF3 and TRAF5. Very low level of expression. Detected in spleen, thymus and lung. Highly expressed in HTLV-1 infected T-cell lines.

It is found in the cell membrane. Receptor for TNFSF8/CD30L. May play a role in the regulation of cellular growth and transformation of activated lymphoblasts. Regulates gene expression through activation of NF-kappa-B. The polypeptide is Tumor necrosis factor receptor superfamily member 8 (Rattus norvegicus (Rat)).